A 396-amino-acid chain; its full sequence is MAKEKFERTKPHVNVGTIGHVDHGKTTLTAAIATVLSKAFGGEAKAYDQIDAAPEEKARGITINTAHVEYETANRHYAHVDCPGHADYVKNMITGAAQMDGAILVCSAADGPMPQTREHILLARQVGVPYIVVFLNKCDMVDDAELLELVEMEVRELLSKYDFPGDDTPIIQGSAKLALEGDEGPMGKEAIMKLAEALDTYIPTPERAIDGAFLMPVEDVFSISGRGTVVTGRIERGIVKVGEEIEIIGIKPTLKTTCTGVEMFRKLLDQGQAGDNVGILLRGTKREEVERGQVLAKPGSITPHTHFTAEVYILGKDEGGRHTPFFNNYRPQFYFRTTDVTGSIELPKDKEMVMPGDNVTITVKLIAPIAMEEGLRFAIREGGRTVGAGVVAKILA.

One can recognise a tr-type G domain in the interval 10–206; the sequence is KPHVNVGTIG…ALDTYIPTPE (197 aa). The tract at residues 19–26 is G1; sequence GHVDHGKT. Residue 19 to 26 participates in GTP binding; it reads GHVDHGKT. Thr-26 lines the Mg(2+) pocket. The tract at residues 60 to 64 is G2; the sequence is GITIN. The segment at 81–84 is G3; sequence DCPG. GTP contacts are provided by residues 81–85 and 136–139; these read DCPGH and NKCD. The interval 136–139 is G4; that stretch reads NKCD. Residues 174 to 176 are G5; sequence SAK.

The protein belongs to the TRAFAC class translation factor GTPase superfamily. Classic translation factor GTPase family. EF-Tu/EF-1A subfamily. Monomer.

It is found in the cytoplasm. The catalysed reaction is GTP + H2O = GDP + phosphate + H(+). Its function is as follows. GTP hydrolase that promotes the GTP-dependent binding of aminoacyl-tRNA to the A-site of ribosomes during protein biosynthesis. The chain is Elongation factor Tu from Polynucleobacter asymbioticus (strain DSM 18221 / CIP 109841 / QLW-P1DMWA-1) (Polynucleobacter necessarius subsp. asymbioticus).